Consider the following 267-residue polypeptide: Ribosomal RNA small subunit methyltransferase A (267 aa).

S-adenosyl-L-methionine-binding residues include Asn-18, Leu-20, Gly-45, Glu-66, Asp-91, and Asn-112.

It belongs to the class I-like SAM-binding methyltransferase superfamily. rRNA adenine N(6)-methyltransferase family. RsmA subfamily.

The protein resides in the cytoplasm. The enzyme catalyses adenosine(1518)/adenosine(1519) in 16S rRNA + 4 S-adenosyl-L-methionine = N(6)-dimethyladenosine(1518)/N(6)-dimethyladenosine(1519) in 16S rRNA + 4 S-adenosyl-L-homocysteine + 4 H(+). Specifically dimethylates two adjacent adenosines (A1518 and A1519) in the loop of a conserved hairpin near the 3'-end of 16S rRNA in the 30S particle. May play a critical role in biogenesis of 30S subunits. The protein is Ribosomal RNA small subunit methyltransferase A of Shewanella denitrificans (strain OS217 / ATCC BAA-1090 / DSM 15013).